Reading from the N-terminus, the 967-residue chain is Sarcosine oxidase subunit alpha (967 aa).

NAD(+)-binding residues include A141, D160, E161, R162, S168, V207, A420, and T427. (6R)-5,10-methylene-5,6,7,8-tetrahydrofolate-binding residues include T694 and E786.

This sequence belongs to the GcvT family. In terms of assembly, heterotetramer composed of subunits alpha (SoxA), beta (SoxB), gamma (SoxG) and delta (SoxD). NAD(+) is required as a cofactor.

Its subcellular location is the cytoplasm. The catalysed reaction is sarcosine + (6S)-5,6,7,8-tetrahydrofolate + O2 = (6R)-5,10-methylene-5,6,7,8-tetrahydrofolate + glycine + H2O2. It catalyses the reaction sarcosine + O2 + H2O = formaldehyde + glycine + H2O2. Its function is as follows. In the presence of tetrahydrofolate, catalyzes the oxidative demethylation of sarcosine to yield glycine, 5,10-methylenetetrahydrofolate and hydrogen peroxide. In the absence of tetrahydrofolate, catalyzes the oxidative demethylation of sarcosine to yield glycine, formaldehyde and hydrogen peroxide. The protein is Sarcosine oxidase subunit alpha of Corynebacterium sp. (strain P-1).